A 562-amino-acid chain; its full sequence is Arginine--tRNA ligase (562 aa).

A 'HIGH' region motif is present at residues 129-139 (ANPTGPLHVGH).

The protein belongs to the class-I aminoacyl-tRNA synthetase family. As to quaternary structure, monomer.

The protein resides in the cytoplasm. It carries out the reaction tRNA(Arg) + L-arginine + ATP = L-arginyl-tRNA(Arg) + AMP + diphosphate. The polypeptide is Arginine--tRNA ligase (argS) (Xylella fastidiosa (strain 9a5c)).